A 111-amino-acid chain; its full sequence is Large ribosomal subunit protein uL23 (111 aa).

The protein belongs to the universal ribosomal protein uL23 family. Part of the 50S ribosomal subunit. Contacts protein L29, and trigger factor when it is bound to the ribosome.

Its function is as follows. One of the early assembly proteins it binds 23S rRNA. One of the proteins that surrounds the polypeptide exit tunnel on the outside of the ribosome. Forms the main docking site for trigger factor binding to the ribosome. This chain is Large ribosomal subunit protein uL23, found in Chlamydia muridarum (strain MoPn / Nigg).